A 129-amino-acid polypeptide reads, in one-letter code: Small ribosomal subunit protein uS11 (129 aa).

It belongs to the universal ribosomal protein uS11 family. As to quaternary structure, part of the 30S ribosomal subunit. Interacts with proteins S7 and S18. Binds to IF-3.

Located on the platform of the 30S subunit, it bridges several disparate RNA helices of the 16S rRNA. Forms part of the Shine-Dalgarno cleft in the 70S ribosome. This chain is Small ribosomal subunit protein uS11, found in Yersinia pseudotuberculosis serotype O:1b (strain IP 31758).